A 262-amino-acid polypeptide reads, in one-letter code: MILDEIIKKTKADLEKRKKEYPLEWLGRSLAYNPFVPRPVEEVLKSTPDDPYKIIAEVKKASPSKGVIREDFDPVAIAKEYEKGGANAISVLTEPHYFQGHIEYLTQIRRYVPMPLLRKDFIIDKYQLVEALVYGADFVLLIAKALSRKELKELLEYTWHLGMEALVEIHDKADLIKAIFAGANIIGINHRNLETFEMDMSLSEKLIPLIPNGKIIVAESGIHSHEQVVELNKLGVDAFLIGEHFMRQDNIAEVVKKIKGLA.

It belongs to the TrpC family.

The catalysed reaction is 1-(2-carboxyphenylamino)-1-deoxy-D-ribulose 5-phosphate + H(+) = (1S,2R)-1-C-(indol-3-yl)glycerol 3-phosphate + CO2 + H2O. Its pathway is amino-acid biosynthesis; L-tryptophan biosynthesis; L-tryptophan from chorismate: step 4/5. The sequence is that of Indole-3-glycerol phosphate synthase from Nitratiruptor sp. (strain SB155-2).